The primary structure comprises 89 residues: Small ribosomal subunit protein uS15 (89 aa).

It belongs to the universal ribosomal protein uS15 family. In terms of assembly, part of the 30S ribosomal subunit. Forms a bridge to the 50S subunit in the 70S ribosome, contacting the 23S rRNA.

In terms of biological role, one of the primary rRNA binding proteins, it binds directly to 16S rRNA where it helps nucleate assembly of the platform of the 30S subunit by binding and bridging several RNA helices of the 16S rRNA. Functionally, forms an intersubunit bridge (bridge B4) with the 23S rRNA of the 50S subunit in the ribosome. The chain is Small ribosomal subunit protein uS15 from Buchnera aphidicola subsp. Cinara cedri (strain Cc).